A 345-amino-acid chain; its full sequence is Anthranilate phosphoribosyltransferase (345 aa).

Residues Gly-84, 87–88 (GD), Thr-92, 94–97 (NIST), 112–120 (KHGNRSVSS), and Ser-124 contribute to the 5-phospho-alpha-D-ribose 1-diphosphate site. Gly-84 provides a ligand contact to anthranilate. Ser-96 serves as a coordination point for Mg(2+). Asn-115 serves as a coordination point for anthranilate. Position 170 (Arg-170) interacts with anthranilate. Mg(2+) contacts are provided by Asp-229 and Glu-230.

The protein belongs to the anthranilate phosphoribosyltransferase family. In terms of assembly, homodimer. It depends on Mg(2+) as a cofactor.

It carries out the reaction N-(5-phospho-beta-D-ribosyl)anthranilate + diphosphate = 5-phospho-alpha-D-ribose 1-diphosphate + anthranilate. The protein operates within amino-acid biosynthesis; L-tryptophan biosynthesis; L-tryptophan from chorismate: step 2/5. In terms of biological role, catalyzes the transfer of the phosphoribosyl group of 5-phosphorylribose-1-pyrophosphate (PRPP) to anthranilate to yield N-(5'-phosphoribosyl)-anthranilate (PRA). The protein is Anthranilate phosphoribosyltransferase of Xanthomonas campestris pv. campestris (strain 8004).